A 261-amino-acid polypeptide reads, in one-letter code: DNA repair protein RecO (261 aa).

This sequence belongs to the RecO family.

Involved in DNA repair and RecF pathway recombination. This Gloeobacter violaceus (strain ATCC 29082 / PCC 7421) protein is DNA repair protein RecO.